Reading from the N-terminus, the 155-residue chain is Snaclec bothrojaracin subunit alpha (155 aa).

The signal sequence occupies residues 1–23 (MGRFLFVSFGLLVVFLSLSGTAA). 3 disulfide bridges follow: Cys25–Cys36, Cys53–Cys150, and Cys125–Cys142. Residues 32 to 151 (HEGHCYKFFQ…CGQQNPFVCK (120 aa)) enclose the C-type lectin domain.

Belongs to the snaclec family. As to quaternary structure, heterodimer of subunits alpha and beta; disulfide-linked. Expressed by the venom gland.

It is found in the secreted. Functionally, this potent antithrombotic agent acts in a calcium-independent manner. Exerts its anticoagulant effect by two distinct mechanisms. It binds to activated thrombin through exosite 1, blocking fibrinogen clotting, platelet activation, factor V activation and other effects, and it interacts with prothrombin (F2), decreasing its proteolytic activation -especially in the presence of factor Va. In vivo, intravenous injection before thrombosis induction causes a significant decrease in thrombus weight. Furthermore, BJC shows a prolonged effect by remaining in the plasma bound to prothrombin for at least 12 hours. The sequence is that of Snaclec bothrojaracin subunit alpha from Bothrops jararaca (Jararaca).